The chain runs to 275 residues: 3-methyl-2-oxobutanoate hydroxymethyltransferase (275 aa).

Positions 44 and 83 each coordinate Mg(2+). 3-methyl-2-oxobutanoate-binding positions include 44 to 45, Asp83, and Lys113; that span reads DS. Glu115 serves as a coordination point for Mg(2+). Glu182 serves as the catalytic Proton acceptor.

This sequence belongs to the PanB family. In terms of assembly, homodecamer; pentamer of dimers. The cofactor is Mg(2+).

Its subcellular location is the cytoplasm. It catalyses the reaction 3-methyl-2-oxobutanoate + (6R)-5,10-methylene-5,6,7,8-tetrahydrofolate + H2O = 2-dehydropantoate + (6S)-5,6,7,8-tetrahydrofolate. Its pathway is cofactor biosynthesis; (R)-pantothenate biosynthesis; (R)-pantoate from 3-methyl-2-oxobutanoate: step 1/2. In terms of biological role, catalyzes the reversible reaction in which hydroxymethyl group from 5,10-methylenetetrahydrofolate is transferred onto alpha-ketoisovalerate to form ketopantoate. This is 3-methyl-2-oxobutanoate hydroxymethyltransferase from Clostridium botulinum (strain Alaska E43 / Type E3).